The primary structure comprises 300 residues: MPEPHPAPQPYTVAALYQFRALPDPAALRAELLALGERLELCGTLIVADEGINGTVAGSAAAIAELHAFLLASGFDRLEYKESQASEKPFKRYKVRLKKEIVTLGVPVAPREQVGTYLDPQAWNDLLADPEVIVVDTRNRYEVKAGTFQGAVDPEIDSFREFPAWVDEHLAGAEGKKIAMFCTGGIRCEKSTSLLLQKGFQDVYHLKGGILKYLEDVPQAQSRWDGECFVFDGRVTVGHGLQEGDAVMCHSCGWPLTAQERAHPQFEEGVSCEHCFDETTDVQKAAFRERQRMYEAGHLT.

The Rhodanese domain occupies 128-222 (ADPEVIVVDT…YLEDVPQAQS (95 aa)). The Cysteine persulfide intermediate role is filled by cysteine 182.

Belongs to the TrhO family.

The enzyme catalyses uridine(34) in tRNA + AH2 + O2 = 5-hydroxyuridine(34) in tRNA + A + H2O. In terms of biological role, catalyzes oxygen-dependent 5-hydroxyuridine (ho5U) modification at position 34 in tRNAs. The polypeptide is tRNA uridine(34) hydroxylase (Deinococcus radiodurans (strain ATCC 13939 / DSM 20539 / JCM 16871 / CCUG 27074 / LMG 4051 / NBRC 15346 / NCIMB 9279 / VKM B-1422 / R1)).